The primary structure comprises 1920 residues: rRNA biogenesis protein RRP5 (1920 aa).

The tract at residues 1 to 65 is disordered; it reads MVVPQKKFAN…GTSLSKKERE (65 aa). S1 motif domains follow at residues 128-210, 226-291, 314-384, 400-473, 490-557, 577-646, 661-733, 753-822, 866-930, 958-1031, 1054-1129, 1153-1224, 1260-1334, 1369-1438, and 1459-1529; these read GMKL…LSLR, GMVF…LSSD, GMMV…LTLS, GDIF…GTLK, GMVT…VTYK, GLVT…LSFM, GSIV…LSSK, NSVV…LSLK, GSLI…LSLR, EVHQ…LLLD, GSVV…LSVK, GQCV…LVQR, GDIL…LSLR, DMGV…VTLK, and GDMI…LGMK. Disordered regions lie at residues 1535 to 1555 and 1605 to 1652; these read NGDDDKAQPLSEDNTSMECDP and TDFD…LEHH. Residues 1620 to 1652 are compositionally biased toward basic and acidic residues; that stretch reads NKDEKSKRREKQKDKEEREKKIQAAEGRLLEHH. 6 HAT repeats span residues 1651–1683, 1685–1722, 1726–1758, 1759–1791, 1828–1860, and 1862–1897; these read HHAPENADEFEKLVRSSPNSSFVWIKYMAFMLS, ADIEKARSIAERALRTINIREEEEKLNIWVAYFNLENE, PPEESVKKVFERARQYCDPKKVYLALLGVYERT, EQYKLADKLLDEMIKKFKQSCKIWLRKIQSSLK, GVADRGRSLFEGVLREYPKRTDLWSVYLDQEIR, and GEDDVIRSLFERAISLSLPPKKMKFLFKKFLEYEKS.

Highly expressed in flowers and at lower levels in roots, leaves, stems and siliques.

It is found in the nucleus. The protein localises to the nucleolus. Involved in the biogenesis of ribosomal RNA (rRNA). Required for the formation of 5.8S rRNA. Required for normal development of female gametophytes. The protein is rRNA biogenesis protein RRP5 of Arabidopsis thaliana (Mouse-ear cress).